The chain runs to 180 residues: Large ribosomal subunit protein uL5 (180 aa).

It belongs to the universal ribosomal protein uL5 family. Part of the 50S ribosomal subunit; part of the 5S rRNA/L5/L18/L25 subcomplex. Contacts the 5S rRNA and the P site tRNA. Forms a bridge to the 30S subunit in the 70S ribosome.

Functionally, this is one of the proteins that bind and probably mediate the attachment of the 5S RNA into the large ribosomal subunit, where it forms part of the central protuberance. In the 70S ribosome it contacts protein S13 of the 30S subunit (bridge B1b), connecting the 2 subunits; this bridge is implicated in subunit movement. Contacts the P site tRNA; the 5S rRNA and some of its associated proteins might help stabilize positioning of ribosome-bound tRNAs. In Symbiobacterium thermophilum (strain DSM 24528 / JCM 14929 / IAM 14863 / T), this protein is Large ribosomal subunit protein uL5.